Here is a 452-residue protein sequence, read N- to C-terminus: Gastrin/cholecystokinin type B receptor (452 aa).

The segment at 1-21 is disordered; that stretch reads MELLKLNRSVQGPGPGSGSSL. At 1 to 57 the chain is on the extracellular side; it reads MELLKLNRSVQGPGPGSGSSLCRPGVSLLNSSSAGNLSCDPPRIRGTGTRELEMAIR. N-linked (GlcNAc...) asparagine glycosylation is found at Asn-7, Asn-30, and Asn-36. A helical transmembrane segment spans residues 58–79; that stretch reads ITLYAVIFLMSVGGNVLIIVVL. The Cytoplasmic portion of the chain corresponds to 80–87; that stretch reads GLSRRLRT. A helical membrane pass occupies residues 88–109; it reads VTNAFLLSLAVSDLLLAVACMP. Residues 110–131 lie on the Extracellular side of the membrane; that stretch reads FTLLPNLMGTFIFGTVICKAIS. A disulfide bridge links Cys-127 with Cys-205. Residues 132–150 form a helical membrane-spanning segment; the sequence is YLMGVSVSVSTLNLVAIAL. Residues 151–170 are Cytoplasmic-facing; sequence ERYSAICRPLQARVWQTRSH. The helical transmembrane segment at 171–189 threads the bilayer; the sequence is AARVILATWLLSGLLMVPY. At 190 to 219 the chain is on the extracellular side; it reads PVYTMVQPVGPRVLQCMHRWPSARVQQTWS. The helical transmembrane segment at 220–242 threads the bilayer; that stretch reads VLLLLLLFFIPGVVIAVAYGLIS. Residues 243–338 lie on the Cytoplasmic side of the membrane; it reads RELYLGLHFD…KLLAKKRVVR (96 aa). Positions 257-286 are disordered; it reads SETQSRARNQGGLPGGAAPGPVHQNGGCRP. Residues 339-360 traverse the membrane as a helical segment; that stretch reads MLLVIVLLFFLCWLPVYSVNTW. Residues 361–378 lie on the Extracellular side of the membrane; it reads RAFDGPGAQRALSGAPIS. Residues 379-399 form a helical membrane-spanning segment; it reads FIHLLSYVSACVNPLVYCFMH. Topologically, residues 400-452 are cytoplasmic; the sequence is RRFRQACLDTCARCCPRPPRARPQPLPDEDPPTPSIASLSRLSYTTISTLGPG. The S-palmitoyl cysteine moiety is linked to residue Cys-413. The disordered stretch occupies residues 421–452; the sequence is RPQPLPDEDPPTPSIASLSRLSYTTISTLGPG. The segment covering 434–452 has biased composition (polar residues); the sequence is SIASLSRLSYTTISTLGPG.

It belongs to the G-protein coupled receptor 1 family. Parietal cells, pancreas, brain and various neoplastic tissues.

It localises to the cell membrane. Functionally, receptor for gastrin and cholecystokinin. The CCK-B receptors occur throughout the central nervous system where they modulate anxiety, analgesia, arousal, and neuroleptic activity. This receptor mediates its action by association with G proteins that activate a phosphatidylinositol-calcium second messenger system. The sequence is that of Gastrin/cholecystokinin type B receptor (Cckbr) from Rattus norvegicus (Rat).